Consider the following 393-residue polypeptide: Formate-dependent phosphoribosylglycinamide formyltransferase (393 aa).

Residues 22 to 23 and glutamate 82 each bind N(1)-(5-phospho-beta-D-ribosyl)glycinamide; that span reads EL. ATP is bound by residues arginine 114, lysine 155, 160–165, 195–198, and glutamate 203; these read SSGKGQ and EGFI. The ATP-grasp domain maps to 119-308; sequence RLAAEELKLP…QFALHARAIL (190 aa). Mg(2+)-binding residues include glutamate 267 and glutamate 279. N(1)-(5-phospho-beta-D-ribosyl)glycinamide-binding positions include aspartate 286, lysine 356, and 363 to 364; that span reads RR.

It belongs to the PurK/PurT family. Homodimer.

It catalyses the reaction N(1)-(5-phospho-beta-D-ribosyl)glycinamide + formate + ATP = N(2)-formyl-N(1)-(5-phospho-beta-D-ribosyl)glycinamide + ADP + phosphate + H(+). The protein operates within purine metabolism; IMP biosynthesis via de novo pathway; N(2)-formyl-N(1)-(5-phospho-D-ribosyl)glycinamide from N(1)-(5-phospho-D-ribosyl)glycinamide (formate route): step 1/1. Involved in the de novo purine biosynthesis. Catalyzes the transfer of formate to 5-phospho-ribosyl-glycinamide (GAR), producing 5-phospho-ribosyl-N-formylglycinamide (FGAR). Formate is provided by PurU via hydrolysis of 10-formyl-tetrahydrofolate. This is Formate-dependent phosphoribosylglycinamide formyltransferase from Pseudomonas syringae pv. syringae (strain B728a).